A 274-amino-acid chain; its full sequence is 16S rRNA (guanine(1405)-N(7))-methyltransferase (274 aa).

S-adenosyl-L-methionine contacts are provided by residues 102 to 108, Ala133, Asp156, 182 to 183, Leu198, and Gln207; these read HISTRER and DL.

It belongs to the methyltransferase superfamily. Aminoglycoside resistance family.

The catalysed reaction is guanosine(1405) in 16S rRNA + S-adenosyl-L-methionine = N(7)-methylguanosine(1405) in 16S rRNA + S-adenosyl-L-homocysteine. Its function is as follows. Specifically methylates the N(7) position of guanine 1405 in 16S rRNA. Confers resistance to various aminoglycosides, including gentamicin, kanamycin and sisomicin. The sequence is that of 16S rRNA (guanine(1405)-N(7))-methyltransferase (sgm) from Micromonospora zionensis.